A 20-amino-acid chain; its full sequence is uncharacterized protein (20 aa).

This is an uncharacterized protein from Escherichia coli (strain K12).